Reading from the N-terminus, the 838-residue chain is Histidine biosynthesis trifunctional protein (838 aa).

Residues 1 to 271 (MIFPILPVIS…MVEPRTGYGF (271 aa)) form a phosphoribosyl-AMP cyclohydrolase region. Residues 272 to 360 (CHRETKFTCF…VYFAMVWCIK (89 aa)) form a phosphoribosyl-ATP pyrophosphohydrolase region. A histidinol dehydrogenase region spans residues 361 to 838 (HGVRLADIEK…IRMERMAETK (478 aa)). Zn(2+) is bound by residues Gln660 and His663. Residues Glu729 and His730 contribute to the active site. Zn(2+)-binding residues include Asp764 and His823.

It in the C-terminal section; belongs to the histidinol dehydrogenase family. Requires Zn(2+) as cofactor.

The catalysed reaction is 1-(5-phospho-beta-D-ribosyl)-5'-AMP + H2O = 1-(5-phospho-beta-D-ribosyl)-5-[(5-phospho-beta-D-ribosylamino)methylideneamino]imidazole-4-carboxamide. It catalyses the reaction 1-(5-phospho-beta-D-ribosyl)-ATP + H2O = 1-(5-phospho-beta-D-ribosyl)-5'-AMP + diphosphate + H(+). It carries out the reaction L-histidinol + 2 NAD(+) + H2O = L-histidine + 2 NADH + 3 H(+). Its pathway is amino-acid biosynthesis; L-histidine biosynthesis; L-histidine from 5-phospho-alpha-D-ribose 1-diphosphate: step 2/9. It functions in the pathway amino-acid biosynthesis; L-histidine biosynthesis; L-histidine from 5-phospho-alpha-D-ribose 1-diphosphate: step 3/9. It participates in amino-acid biosynthesis; L-histidine biosynthesis; L-histidine from 5-phospho-alpha-D-ribose 1-diphosphate: step 9/9. This chain is Histidine biosynthesis trifunctional protein (HIS4), found in Candida albicans (Yeast).